Reading from the N-terminus, the 421-residue chain is Imidazolonepropionase (421 aa).

Positions 81 and 83 each coordinate Fe(3+). Zn(2+) contacts are provided by H81 and H83. 4-imidazolone-5-propanoate is bound by residues R90, Y153, and H186. Residue Y153 coordinates N-formimidoyl-L-glutamate. Residue H251 participates in Fe(3+) binding. Position 251 (H251) interacts with Zn(2+). Residue E254 coordinates 4-imidazolone-5-propanoate. D326 contacts Fe(3+). D326 contributes to the Zn(2+) binding site. N-formimidoyl-L-glutamate is bound by residues N328 and G330. S331 is a binding site for 4-imidazolone-5-propanoate.

It belongs to the metallo-dependent hydrolases superfamily. HutI family. The cofactor is Zn(2+). Fe(3+) is required as a cofactor.

The protein localises to the cytoplasm. It catalyses the reaction 4-imidazolone-5-propanoate + H2O = N-formimidoyl-L-glutamate. The protein operates within amino-acid degradation; L-histidine degradation into L-glutamate; N-formimidoyl-L-glutamate from L-histidine: step 3/3. Catalyzes the hydrolytic cleavage of the carbon-nitrogen bond in imidazolone-5-propanoate to yield N-formimidoyl-L-glutamate. It is the third step in the universal histidine degradation pathway. The chain is Imidazolonepropionase from Streptococcus pyogenes serotype M2 (strain MGAS10270).